Consider the following 397-residue polypeptide: Tryptophan synthase beta chain (397 aa).

The residue at position 87 (Lys87) is an N6-(pyridoxal phosphate)lysine.

Belongs to the TrpB family. Tetramer of two alpha and two beta chains. The cofactor is pyridoxal 5'-phosphate.

It catalyses the reaction (1S,2R)-1-C-(indol-3-yl)glycerol 3-phosphate + L-serine = D-glyceraldehyde 3-phosphate + L-tryptophan + H2O. It participates in amino-acid biosynthesis; L-tryptophan biosynthesis; L-tryptophan from chorismate: step 5/5. In terms of biological role, the beta subunit is responsible for the synthesis of L-tryptophan from indole and L-serine. In Salmonella agona (strain SL483), this protein is Tryptophan synthase beta chain.